A 284-amino-acid polypeptide reads, in one-letter code: Efem/EfeO family lipoprotein (284 aa).

The first 17 residues, 1 to 17 (MKKLTTLLLASTLLIAA), serve as a signal peptide directing secretion. A lipid anchor (N-palmitoyl cysteine) is attached at cysteine 18. Cysteine 18 carries the S-diacylglycerol cysteine lipid modification.

Belongs to the EfeM/EfeO family.

The protein resides in the cell membrane. This is Efem/EfeO family lipoprotein from Staphylococcus aureus (strain MRSA252).